A 548-amino-acid polypeptide reads, in one-letter code: Probable zinc metalloprotease EGY1, chloroplastic (548 aa).

The transit peptide at 1–18 (MGTLTSVAFAAAVNIRFR) directs the protein to the chloroplast. The segment covering 61–76 (NSNRDDSIGENGETHK) has biased composition (basic and acidic residues). Residues 61-116 (NSNRDDSIGENGETHKSSVVKTATFEEEDEETSKSSSTTSSSNEFGSDKTSMPSTI) are disordered. The segment covering 103–116 (NEFGSDKTSMPSTI) has biased composition (polar residues). The next 8 helical transmembrane spans lie at 242 to 262 (YVIA…LGIA), 290 to 310 (LYPF…ILLF), 326 to 346 (LSIP…ITQF), 361 to 381 (LAGP…GLFL), 388 to 408 (ANDL…LGLI), 416 to 436 (AALH…WCGL), 474 to 494 (MLGL…YVLI), and 516 to 536 (ALVG…WDEL).

This sequence belongs to the peptidase M50B family. As to expression, expressed in roots, leaves, cotyledons, hypocotyls, stems, flowers and siliques.

It localises to the plastid. It is found in the chloroplast membrane. Membrane-associated and ATP-independent metalloprotease required for development of both thylakoid grana and well-organized lamellae in chloroplast. Required for the accumulation of chlorophyll and chlorophyll a/b binding (CAB) proteins (from both PS I and PS II) in chloroplast membranes, and for grana formation and normal chloroplast development. Involved in the regulation of nuclear gene expression in response to ammonium stress and interacts with ABA signaling. Carries out beta-casein degradation in an ATP-independent manner in vitro. In Arabidopsis thaliana (Mouse-ear cress), this protein is Probable zinc metalloprotease EGY1, chloroplastic (EGY1).